The following is a 594-amino-acid chain: MQHQVKACGDSKSTTRSLQGNRRSGAASLKKPSGNGTFLATDVTNLDMNSSFLSKKLKRNGNPVIGMNIQSSNAFLGAQLAANNFNFAQQLNHAALYNNLEFQMAVASGDVPSLMSMPAHKPSLSVSSIDPSMDMSQFTEELNAIQNMSYSPMMPSSAALQSIFAANDSSAISPYMNLQKTSLLPTSTLRVSGARKNRIVEVKTLNDRMVIVSIDPQATASTRPNIIPLNRPLMSVAQNCIDMTKKRPLSAEALYSRKVFIGGLPIDVAEEEVWATFGAFGKVLVDWPRRPEHNNGRGGDNMYEVEMGRRNLRSVSGYVFLVFTNERSVQELVNACEFYENKYYLQLSSPTMSDKAVQVRPWRLSDIDYFCDDSCSVDHRRTVFIGGVPRPTRASDLASSLQDYYGKVSYVGIDIDPELKYPKGAARVTFANSQSFVRAISGRFVQVTHAETNKRVEIKPYVMEDQHCDECQGVLCKHNYAPYFCGDSSCLQYYCEACWDRMHYIVCDSRADHRPMVRTGDQTRILPRPPHHQSSHYSPRSHQMMNHDSMESSNQSRGNTSSIISRIVNRNSAASVMDRQTTKPFAATPAVIGY.

The tract at residues 1 to 33 (MQHQVKACGDSKSTTRSLQGNRRSGAASLKKPS) is disordered. Positions 11–22 (SKSTTRSLQGNR) are enriched in polar residues. RRM domains lie at 257 to 364 (RKVF…PWRL) and 381 to 452 (RTVF…HAET). A disordered region spans residues 519-560 (TGDQTRILPRPPHHQSSHYSPRSHQMMNHDSMESSNQSRGNT). The segment covering 535 to 560 (SHYSPRSHQMMNHDSMESSNQSRGNT) has biased composition (polar residues).

As to quaternary structure, interacts with fbf-1.

Functionally, cytoplasmic polyadenylation element binding protein that binds to and regulates the translation of specific mRNAs. Essential for progression through meiosis. Involved in spermatogenesis. This chain is Cytoplasmic polyadenylation element-binding protein 1 (cpb-1), found in Caenorhabditis remanei (Caenorhabditis vulgaris).